Consider the following 228-residue polypeptide: Phosphoribosylformylglycinamidine synthase subunit PurQ (228 aa).

The 224-residue stretch at 3–226 folds into the Glutamine amidotransferase type-1 domain; the sequence is FAVIVFPGSN…VNYWRETHVV (224 aa). Cysteine 86 serves as the catalytic Nucleophile. Residues histidine 195 and glutamate 197 contribute to the active site.

As to quaternary structure, part of the FGAM synthase complex composed of 1 PurL, 1 PurQ and 2 PurS subunits.

The protein resides in the cytoplasm. The enzyme catalyses N(2)-formyl-N(1)-(5-phospho-beta-D-ribosyl)glycinamide + L-glutamine + ATP + H2O = 2-formamido-N(1)-(5-O-phospho-beta-D-ribosyl)acetamidine + L-glutamate + ADP + phosphate + H(+). The catalysed reaction is L-glutamine + H2O = L-glutamate + NH4(+). It functions in the pathway purine metabolism; IMP biosynthesis via de novo pathway; 5-amino-1-(5-phospho-D-ribosyl)imidazole from N(2)-formyl-N(1)-(5-phospho-D-ribosyl)glycinamide: step 1/2. Functionally, part of the phosphoribosylformylglycinamidine synthase complex involved in the purines biosynthetic pathway. Catalyzes the ATP-dependent conversion of formylglycinamide ribonucleotide (FGAR) and glutamine to yield formylglycinamidine ribonucleotide (FGAM) and glutamate. The FGAM synthase complex is composed of three subunits. PurQ produces an ammonia molecule by converting glutamine to glutamate. PurL transfers the ammonia molecule to FGAR to form FGAM in an ATP-dependent manner. PurS interacts with PurQ and PurL and is thought to assist in the transfer of the ammonia molecule from PurQ to PurL. This chain is Phosphoribosylformylglycinamidine synthase subunit PurQ, found in Geobacillus thermodenitrificans (strain NG80-2).